A 121-amino-acid chain; its full sequence is MSLTNEQIVDAIAEKSLMEVMELVKAIEEKFGVSAAAPVAAAAAGPAAVVEEQTEFNVVLTNCGANKVGVIKAVRAVTGLGLKEAKDLTEAGGMLKEGASKDEAEKIKKELTEAGATVEIK.

This sequence belongs to the bacterial ribosomal protein bL12 family. Homodimer. Part of the ribosomal stalk of the 50S ribosomal subunit. Forms a multimeric L10(L12)X complex, where L10 forms an elongated spine to which 2 to 4 L12 dimers bind in a sequential fashion. Binds GTP-bound translation factors.

Forms part of the ribosomal stalk which helps the ribosome interact with GTP-bound translation factors. Is thus essential for accurate translation. This Xanthomonas euvesicatoria pv. vesicatoria (strain 85-10) (Xanthomonas campestris pv. vesicatoria) protein is Large ribosomal subunit protein bL12.